The sequence spans 518 residues: Lysine--tRNA ligase (518 aa).

Residues Glu407 and Glu414 each contribute to the Mg(2+) site.

The protein belongs to the class-II aminoacyl-tRNA synthetase family. As to quaternary structure, homodimer. Mg(2+) is required as a cofactor.

The protein localises to the cytoplasm. The catalysed reaction is tRNA(Lys) + L-lysine + ATP = L-lysyl-tRNA(Lys) + AMP + diphosphate. This chain is Lysine--tRNA ligase, found in Helicobacter hepaticus (strain ATCC 51449 / 3B1).